The primary structure comprises 251 residues: Pyridoxine 5'-phosphate synthase (251 aa).

3-amino-2-oxopropyl phosphate is bound by residues asparagine 8 and arginine 19. Histidine 44 acts as the Proton acceptor in catalysis. Arginine 46 and histidine 51 together coordinate 1-deoxy-D-xylulose 5-phosphate. Residue glutamate 76 is the Proton acceptor of the active site. Threonine 106 contacts 1-deoxy-D-xylulose 5-phosphate. Catalysis depends on histidine 200, which acts as the Proton donor. 3-amino-2-oxopropyl phosphate is bound by residues aspartate 201 and 223 to 224; that span reads GH.

This sequence belongs to the PNP synthase family. As to quaternary structure, homooctamer; tetramer of dimers.

The protein resides in the cytoplasm. The catalysed reaction is 3-amino-2-oxopropyl phosphate + 1-deoxy-D-xylulose 5-phosphate = pyridoxine 5'-phosphate + phosphate + 2 H2O + H(+). It participates in cofactor biosynthesis; pyridoxine 5'-phosphate biosynthesis; pyridoxine 5'-phosphate from D-erythrose 4-phosphate: step 5/5. Functionally, catalyzes the complicated ring closure reaction between the two acyclic compounds 1-deoxy-D-xylulose-5-phosphate (DXP) and 3-amino-2-oxopropyl phosphate (1-amino-acetone-3-phosphate or AAP) to form pyridoxine 5'-phosphate (PNP) and inorganic phosphate. The protein is Pyridoxine 5'-phosphate synthase of Agrobacterium fabrum (strain C58 / ATCC 33970) (Agrobacterium tumefaciens (strain C58)).